We begin with the raw amino-acid sequence, 567 residues long: Urease subunit alpha (567 aa).

Residues 129-567 (GGVDSHIHFI…LPLAQRYFLF (439 aa)) form the Urease domain. Residues H134, H136, and K217 each coordinate Ni(2+). N6-carboxylysine is present on K217. Residue H219 participates in substrate binding. 2 residues coordinate Ni(2+): H246 and H272. H320 serves as the catalytic Proton donor. D360 lines the Ni(2+) pocket.

Belongs to the metallo-dependent hydrolases superfamily. Urease alpha subunit family. Heterotrimer of UreA (gamma), UreB (beta) and UreC (alpha) subunits. Three heterotrimers associate to form the active enzyme. It depends on Ni cation as a cofactor. Carboxylation allows a single lysine to coordinate two nickel ions.

It is found in the cytoplasm. The catalysed reaction is urea + 2 H2O + H(+) = hydrogencarbonate + 2 NH4(+). It participates in nitrogen metabolism; urea degradation; CO(2) and NH(3) from urea (urease route): step 1/1. This Pseudomonas putida (strain ATCC 47054 / DSM 6125 / CFBP 8728 / NCIMB 11950 / KT2440) protein is Urease subunit alpha.